The primary structure comprises 109 residues: Nucleoid-associated protein CC_0268 (109 aa).

This sequence belongs to the YbaB/EbfC family. Homodimer.

The protein localises to the cytoplasm. The protein resides in the nucleoid. Binds to DNA and alters its conformation. May be involved in regulation of gene expression, nucleoid organization and DNA protection. This chain is Nucleoid-associated protein CC_0268, found in Caulobacter vibrioides (strain ATCC 19089 / CIP 103742 / CB 15) (Caulobacter crescentus).